The sequence spans 271 residues: MVEIVEEPDDHQSSSTGAGSSGSSSAPPPPPPPAYSSISQYVSANTMECVLFAARVLTVFFALNYMIPFIGLVPAHSAYYKIFAASAATFALRLHTRIQGQFALNAQFIQRLIIEDSFHYLVYSVVFLMAAPVSMAALPVTIYAALHACTFMTKILRETGHTSSIIPKLEQFTAHQTQNALGIIACSEIFLVPLLVSLIFSGKGSLLLPFAYYRFLSLRYASRRNPSTRQAFAQMRGSLQNVAMSSSCPRPISSLIYRAIDFISARAPPVM.

Positions 1-32 (MVEIVEEPDDHQSSSTGAGSSGSSSAPPPPPP) are disordered. A compositionally biased stretch (low complexity) spans 13–25 (SSSTGAGSSGSSS). 3 helical membrane-spanning segments follow: residues 56–76 (VLTV…VPAH), 125–145 (VVFL…IYAA), and 180–200 (ALGI…SLIF).

This sequence belongs to the PER33/POM33 family.

The protein localises to the membrane. The protein is Transmembrane protein 33 homolog of Caenorhabditis elegans.